We begin with the raw amino-acid sequence, 347 residues long: Large ribosomal subunit protein uL3 (347 aa).

It belongs to the universal ribosomal protein uL3 family. Part of the 50S ribosomal subunit. Forms a cluster with proteins L14 and L24e.

Its function is as follows. One of the primary rRNA binding proteins, it binds directly near the 3'-end of the 23S rRNA, where it nucleates assembly of the 50S subunit. This Caldivirga maquilingensis (strain ATCC 700844 / DSM 13496 / JCM 10307 / IC-167) protein is Large ribosomal subunit protein uL3.